Consider the following 447-residue polypeptide: Phosphoglucosamine mutase (447 aa).

The active-site Phosphoserine intermediate is the Ser-102. Ser-102, Asp-241, Asp-243, and Asp-245 together coordinate Mg(2+). The residue at position 102 (Ser-102) is a Phosphoserine.

This sequence belongs to the phosphohexose mutase family. The cofactor is Mg(2+). In terms of processing, activated by phosphorylation.

The catalysed reaction is alpha-D-glucosamine 1-phosphate = D-glucosamine 6-phosphate. Catalyzes the conversion of glucosamine-6-phosphate to glucosamine-1-phosphate. The protein is Phosphoglucosamine mutase of Symbiobacterium thermophilum (strain DSM 24528 / JCM 14929 / IAM 14863 / T).